The primary structure comprises 122 residues: Small ribosomal subunit protein uS13 (122 aa).

Residues 95–122 form a disordered region; the sequence is SLPVRGQRTHTNARTRKGPAKSIAGKKK.

This sequence belongs to the universal ribosomal protein uS13 family. As to quaternary structure, part of the 30S ribosomal subunit. Forms a loose heterodimer with protein S19. Forms two bridges to the 50S subunit in the 70S ribosome.

In terms of biological role, located at the top of the head of the 30S subunit, it contacts several helices of the 16S rRNA. In the 70S ribosome it contacts the 23S rRNA (bridge B1a) and protein L5 of the 50S subunit (bridge B1b), connecting the 2 subunits; these bridges are implicated in subunit movement. Contacts the tRNAs in the A and P-sites. In Mesorhizobium japonicum (strain LMG 29417 / CECT 9101 / MAFF 303099) (Mesorhizobium loti (strain MAFF 303099)), this protein is Small ribosomal subunit protein uS13.